The sequence spans 611 residues: Dihydroxy-acid dehydratase (611 aa).

Residue Asp82 coordinates Mg(2+). Cys123 contacts [2Fe-2S] cluster. Positions 124 and 125 each coordinate Mg(2+). At Lys125 the chain carries N6-carboxylysine. Position 192 (Cys192) interacts with [2Fe-2S] cluster. Glu489 contacts Mg(2+). Catalysis depends on Ser515, which acts as the Proton acceptor. The span at 565-574 shows a compositional bias: basic and acidic residues; that stretch reads ERRKAEEARG. Residues 565 to 586 form a disordered region; the sequence is ERRKAEEARGKKAFTPPTRQRE.

It belongs to the IlvD/Edd family. Homodimer. [2Fe-2S] cluster is required as a cofactor. Mg(2+) serves as cofactor.

It carries out the reaction (2R)-2,3-dihydroxy-3-methylbutanoate = 3-methyl-2-oxobutanoate + H2O. It catalyses the reaction (2R,3R)-2,3-dihydroxy-3-methylpentanoate = (S)-3-methyl-2-oxopentanoate + H2O. The protein operates within amino-acid biosynthesis; L-isoleucine biosynthesis; L-isoleucine from 2-oxobutanoate: step 3/4. It participates in amino-acid biosynthesis; L-valine biosynthesis; L-valine from pyruvate: step 3/4. Functionally, functions in the biosynthesis of branched-chain amino acids. Catalyzes the dehydration of (2R,3R)-2,3-dihydroxy-3-methylpentanoate (2,3-dihydroxy-3-methylvalerate) into 2-oxo-3-methylpentanoate (2-oxo-3-methylvalerate) and of (2R)-2,3-dihydroxy-3-methylbutanoate (2,3-dihydroxyisovalerate) into 2-oxo-3-methylbutanoate (2-oxoisovalerate), the penultimate precursor to L-isoleucine and L-valine, respectively. This Parabacteroides distasonis (strain ATCC 8503 / DSM 20701 / CIP 104284 / JCM 5825 / NCTC 11152) protein is Dihydroxy-acid dehydratase.